The chain runs to 376 residues: N-acetyldiaminopimelate deacetylase (376 aa).

Asp-69 is a catalytic residue. Residue Glu-128 is the Proton acceptor of the active site.

The protein belongs to the peptidase M20A family. N-acetyldiaminopimelate deacetylase subfamily.

It catalyses the reaction N-acetyl-(2S,6S)-2,6-diaminopimelate + H2O = (2S,6S)-2,6-diaminopimelate + acetate. It participates in amino-acid biosynthesis; L-lysine biosynthesis via DAP pathway; LL-2,6-diaminopimelate from (S)-tetrahydrodipicolinate (acetylase route): step 3/3. Its function is as follows. Catalyzes the conversion of N-acetyl-diaminopimelate to diaminopimelate and acetate. This chain is N-acetyldiaminopimelate deacetylase, found in Bacillus cereus (strain B4264).